A 568-amino-acid polypeptide reads, in one-letter code: Urease subunit beta (568 aa).

The region spanning 131-568 (GGIDTHIHFI…LSLAQLYNLF (438 aa)) is the Urease domain. The Ni(2+) site is built by histidine 136, histidine 138, and lysine 219. Lysine 219 is modified (N6-carboxylysine). Histidine 221 is a substrate binding site. Positions 248 and 274 each coordinate Ni(2+). Residue histidine 321 is the Proton donor of the active site. Aspartate 361 is a Ni(2+) binding site.

It belongs to the metallo-dependent hydrolases superfamily. Urease alpha subunit family. In terms of assembly, heterohexamer of 3 UreA (alpha) and 3 UreB (beta) subunits. Ni cation serves as cofactor. In terms of processing, carboxylation allows a single lysine to coordinate two nickel ions.

It localises to the cytoplasm. It catalyses the reaction urea + 2 H2O + H(+) = hydrogencarbonate + 2 NH4(+). The protein operates within nitrogen metabolism; urea degradation; CO(2) and NH(3) from urea (urease route): step 1/1. The polypeptide is Urease subunit beta (Helicobacter heilmannii).